We begin with the raw amino-acid sequence, 457 residues long: Bifunctional protein GlmU (457 aa).

Residues 1-229 (MSNSAKSVVI…HSEMEGVNNR (229 aa)) form a pyrophosphorylase region. Residues 11 to 14 (LAAG), Lys25, Gln76, 81 to 82 (GT), 103 to 105 (YGD), Gly140, Glu154, Asn169, and Asn227 contribute to the UDP-N-acetyl-alpha-D-glucosamine site. Asp105 serves as a coordination point for Mg(2+). Asn227 contacts Mg(2+). Positions 230-250 (LQLAALERIYQTEQAERLLLE) are linker. Residues 251-457 (GVMLLDPARF…GWKRPVKKKQ (207 aa)) are N-acetyltransferase. UDP-N-acetyl-alpha-D-glucosamine is bound by residues Arg333 and Lys351. The active-site Proton acceptor is His363. Tyr366 and Asn377 together coordinate UDP-N-acetyl-alpha-D-glucosamine. Acetyl-CoA is bound by residues Ala380, 386 to 387 (NY), Ser405, Ala423, and Arg440.

In the N-terminal section; belongs to the N-acetylglucosamine-1-phosphate uridyltransferase family. The protein in the C-terminal section; belongs to the transferase hexapeptide repeat family. As to quaternary structure, homotrimer. Mg(2+) is required as a cofactor.

The protein localises to the cytoplasm. The catalysed reaction is alpha-D-glucosamine 1-phosphate + acetyl-CoA = N-acetyl-alpha-D-glucosamine 1-phosphate + CoA + H(+). The enzyme catalyses N-acetyl-alpha-D-glucosamine 1-phosphate + UTP + H(+) = UDP-N-acetyl-alpha-D-glucosamine + diphosphate. It functions in the pathway nucleotide-sugar biosynthesis; UDP-N-acetyl-alpha-D-glucosamine biosynthesis; N-acetyl-alpha-D-glucosamine 1-phosphate from alpha-D-glucosamine 6-phosphate (route II): step 2/2. Its pathway is nucleotide-sugar biosynthesis; UDP-N-acetyl-alpha-D-glucosamine biosynthesis; UDP-N-acetyl-alpha-D-glucosamine from N-acetyl-alpha-D-glucosamine 1-phosphate: step 1/1. It participates in bacterial outer membrane biogenesis; LPS lipid A biosynthesis. In terms of biological role, catalyzes the last two sequential reactions in the de novo biosynthetic pathway for UDP-N-acetylglucosamine (UDP-GlcNAc). The C-terminal domain catalyzes the transfer of acetyl group from acetyl coenzyme A to glucosamine-1-phosphate (GlcN-1-P) to produce N-acetylglucosamine-1-phosphate (GlcNAc-1-P), which is converted into UDP-GlcNAc by the transfer of uridine 5-monophosphate (from uridine 5-triphosphate), a reaction catalyzed by the N-terminal domain. This Proteus mirabilis (strain HI4320) protein is Bifunctional protein GlmU.